Reading from the N-terminus, the 148-residue chain is Extracellular globin-2B (148 aa).

The Globin domain occupies 3–148 (CCSAADRHEV…IADVIKAELP (146 aa)). A disulfide bridge links Cys-4 with Cys-135. His-98 lines the heme b pocket.

The protein belongs to the globin family. Disulfide bonded trimer of chains IIA, IIB, and IIC.

The protein localises to the secreted. In Tylorrhynchus heterochetus (Japanese palolo worm), this protein is Extracellular globin-2B.